We begin with the raw amino-acid sequence, 160 residues long: Protein FrzA (160 aa).

The region spanning 14–155 is the CheW-like domain; that stretch reads EQEFFCFRVG…FSKLLQTARQ (142 aa).

Functionally, necessary for proper aggregation of cells to form fruiting bodies. FRZ genes define a system of signal transduction analogous to the enterobacterial chemotaxis systems. This Myxococcus xanthus protein is Protein FrzA (frzA).